A 293-amino-acid chain; its full sequence is MELKITKEKVTNSLELLGFQPKNIDLWFELIKELFSFYKYSEPISTFLGKCKAHNNNISKVMSSYNNYSYYKITSYKNFNKKDSFMVKFIEFYMQNNINIILDAFDFVHPNNWYYEKTNNTNVLHYIESHMINQLFCTICIIYLSEKTDRYVKKAFIGTISNYLNNKYYRKRQTSIKNHKVITEYMIKYLDPFFSNNTDQINEFMNDNDVGVCFHKCVANKRTLSNNPFLYSQDSYTHWAPLVVLLARNDITNELASFDIEDRINNKALEIICLNDSELTDTTQSSKKIVLNI.

This is an uncharacterized protein from Acanthamoeba polyphaga (Amoeba).